The chain runs to 111 residues: Large ribosomal subunit protein uL22 (111 aa).

The protein belongs to the universal ribosomal protein uL22 family. In terms of assembly, part of the 50S ribosomal subunit.

Functionally, this protein binds specifically to 23S rRNA; its binding is stimulated by other ribosomal proteins, e.g. L4, L17, and L20. It is important during the early stages of 50S assembly. It makes multiple contacts with different domains of the 23S rRNA in the assembled 50S subunit and ribosome. The globular domain of the protein is located near the polypeptide exit tunnel on the outside of the subunit, while an extended beta-hairpin is found that lines the wall of the exit tunnel in the center of the 70S ribosome. The polypeptide is Large ribosomal subunit protein uL22 (Clostridium beijerinckii (strain ATCC 51743 / NCIMB 8052) (Clostridium acetobutylicum)).